A 704-amino-acid chain; its full sequence is Rabphilin-3A (704 aa).

Polar residues predominate over residues 1–12 (MTDTVFSSSSSR). Residues 1–52 (MTDTVFSSSSSRWMCPSDRPLQSNDKEQLQTGWSVHPSGQPDRQRKQEELTD) are disordered. Residues 44 to 161 (QRKQEELTDE…KRSGAWFFKG (118 aa)) form the RabBD domain. The FYVE-type zinc finger occupies 92 to 149 (GDGVNRCILCGEQLGMLGSACVVCEDCKKNVCTKCGVETSNNRPHPVWLCKICIEQRE). 8 residues coordinate Zn(2+): Cys-98, Cys-101, Cys-115, Cys-118, Cys-123, Cys-126, Cys-141, and Cys-144. A disordered region spans residues 167–398 (LPQPMPIKKN…EEEANSYDSD (232 aa)). Residues 205 to 214 (TRGDTEDRRG) are compositionally biased toward basic and acidic residues. Arg-229 carries the omega-N-methylarginine modification. Residue Ser-277 is modified to Phosphoserine. A compositionally biased stretch (low complexity) spans 279–290 (QASRPAPASMQS). Pro residues predominate over residues 291–310 (PAPPQPGQPGPPGGSRPSPG). Over residues 366–380 (QASAAAPQPVVASAR) the composition is skewed to low complexity. The span at 385–398 (PEEDEEEANSYDSD) shows a compositional bias: acidic residues. One can recognise a C2 1 domain in the interval 402–524 (TLGALEFSLL…KPNQRKNFNI (123 aa)). Ca(2+) contacts are provided by Met-432, Asp-433, Asp-439, Asp-494, Glu-495, Asp-496, Glu-502, Glu-549, Asp-591, Asp-597, Asp-651, Tyr-652, Asp-653, and Asp-659. The 134-residue stretch at 560 to 693 (ERGKILVSLM…NKDKKIERWH (134 aa)) folds into the C2 2 domain. Phosphoserine is present on residues Ser-702 and Ser-703.

As to quaternary structure, interacts with RAB3B, RAB3C, RAB3D, RAB8A, RAB27A and RAB27B. Interacts with RAB3A; this interaction recruits RPH3A to synaptic vesicules. Interacts (via C2B domain) with SNAP25. Interacts with deubiquitinating enzyme CAND1; this interaction results in the deubiquitination of RPH3A. Interacts with GRIN2A and DLG4; this ternary complex regulates NMDA receptor composition at postsynaptic membranes. Interacts with SNCA. Ca(2+) is required as a cofactor. In terms of processing, ubiquitinated. Deubiquitinated by CAND1 to prevent its degradation. As to expression, specifically expressed in brain.

The protein localises to the cytoplasmic vesicle. Its subcellular location is the secretory vesicle. The protein resides in the synaptic vesicle membrane. It localises to the cell projection. It is found in the dendritic spine. The protein localises to the postsynaptic cell membrane. Its subcellular location is the membrane. Plays an essential role in docking and fusion steps of regulated exocytosis. At the presynaptic level, RPH3A is recruited by RAB3A to the synaptic vesicle membrane in a GTP-dependent manner where it modulates synaptic vesicle trafficking and calcium-triggered neurotransmitter release. In the post-synaptic compartment, forms a ternary complex with GRIN2A and DLG4 and regulates NMDA receptor stability. Also plays a role in the exocytosis of arginine vasopressin hormone. The protein is Rabphilin-3A (RPH3A) of Bos taurus (Bovine).